Here is a 519-residue protein sequence, read N- to C-terminus: T-complex protein 11-like protein 2 (519 aa).

The segment at 1–57 (MPFNGEKQCVSEDQPSDSDSSRFSESMASLSDYECSRQSFTSDSSSKSSSPASTSPP) is disordered. Ser-16 is subject to Phosphoserine. Low complexity-rich tracts occupy residues 17–29 (DSDSSRFSESMAS) and 36–55 (SRQSFTSDSSSKSSSPASTS).

It belongs to the TCP11 family. In terms of assembly, interacts with FMNL2; this interaction promotes muscle-derived satellite cell (MDSC) migration and differentiation.

Its subcellular location is the cytoplasm. It is found in the cytoskeleton. Promotes the migration of muscle-derived satellite cells (MDSCs) during differentiation throught interaction with FMNL2 and therefore may participate in microfilament assembly. The polypeptide is T-complex protein 11-like protein 2 (Bos taurus (Bovine)).